The following is a 78-amino-acid chain: Translational regulator CsrA (78 aa).

The protein belongs to the CsrA/RsmA family. As to quaternary structure, homodimer; the beta-strands of each monomer intercalate to form a hydrophobic core, while the alpha-helices form wings that extend away from the core.

The protein resides in the cytoplasm. Functionally, a translational regulator that binds mRNA to regulate translation initiation and/or mRNA stability. Usually binds in the 5'-UTR at or near the Shine-Dalgarno sequence preventing ribosome-binding, thus repressing translation. Its main target seems to be the major flagellin gene, while its function is anatagonized by FliW. The chain is Translational regulator CsrA from Nitratidesulfovibrio vulgaris (strain ATCC 29579 / DSM 644 / CCUG 34227 / NCIMB 8303 / VKM B-1760 / Hildenborough) (Desulfovibrio vulgaris).